Here is a 1407-residue protein sequence, read N- to C-terminus: DNA-directed RNA polymerase subunit beta' (1407 aa).

Zn(2+)-binding residues include C70, C72, C85, and C88. Mg(2+) contacts are provided by D460, D462, and D464. The Zn(2+) site is built by C814, C888, C895, and C898.

Belongs to the RNA polymerase beta' chain family. In terms of assembly, the RNAP catalytic core consists of 2 alpha, 1 beta, 1 beta' and 1 omega subunit. When a sigma factor is associated with the core the holoenzyme is formed, which can initiate transcription. Mg(2+) serves as cofactor. The cofactor is Zn(2+).

The enzyme catalyses RNA(n) + a ribonucleoside 5'-triphosphate = RNA(n+1) + diphosphate. DNA-dependent RNA polymerase catalyzes the transcription of DNA into RNA using the four ribonucleoside triphosphates as substrates. The chain is DNA-directed RNA polymerase subunit beta' from Salmonella choleraesuis (strain SC-B67).